The primary structure comprises 318 residues: Ubiquitin-like domain-containing CTD phosphatase 1 (318 aa).

Residues 3–81 enclose the Ubiquitin-like domain; that stretch reads VSVIIKWGGQ…IMMMGTREES (79 aa). In terms of domain architecture, FCP1 homology spans 133-294; sequence PRPGKRLLVL…YKLSQYLKEI (162 aa). Mg(2+) is bound by residues D143, D145, and D253.

It depends on Mg(2+) as a cofactor.

The protein localises to the nucleus. The enzyme catalyses O-phospho-L-seryl-[protein] + H2O = L-seryl-[protein] + phosphate. The catalysed reaction is O-phospho-L-threonyl-[protein] + H2O = L-threonyl-[protein] + phosphate. Its function is as follows. Dephosphorylates 26S nuclear proteasomes, thereby decreasing their proteolytic activity. Recruited to the 19S regulatory particle of the 26S proteasome where it dephosphorylates 19S component psmc2 which impairs psmc2 ATPase activity and disrupts 26S proteasome assembly. Has also been reported to stimulate the proteolytic activity of the 26S proteasome. This Danio rerio (Zebrafish) protein is Ubiquitin-like domain-containing CTD phosphatase 1 (ublcp1).